Reading from the N-terminus, the 428-residue chain is Trigger factor (428 aa).

Positions 163–248 constitute a PPIase FKBP-type domain; it reads KDIVTIDFEG…VKEIKAKELP (86 aa).

Belongs to the FKBP-type PPIase family. Tig subfamily.

Its subcellular location is the cytoplasm. The enzyme catalyses [protein]-peptidylproline (omega=180) = [protein]-peptidylproline (omega=0). Functionally, involved in protein export. Acts as a chaperone by maintaining the newly synthesized protein in an open conformation. Functions as a peptidyl-prolyl cis-trans isomerase. This is Trigger factor from Lachnoclostridium phytofermentans (strain ATCC 700394 / DSM 18823 / ISDg) (Clostridium phytofermentans).